The sequence spans 441 residues: Glutamate--tRNA ligase 1 (441 aa).

The short motif at 9–19 (PSPTGFIHVGN) is the 'HIGH' region element. A 'KMSKS' region motif is present at residues 239–243 (ALSKR). Residue lysine 242 coordinates ATP.

It belongs to the class-I aminoacyl-tRNA synthetase family. Glutamate--tRNA ligase type 1 subfamily. In terms of assembly, monomer.

The protein localises to the cytoplasm. The enzyme catalyses tRNA(Glu) + L-glutamate + ATP = L-glutamyl-tRNA(Glu) + AMP + diphosphate. Its function is as follows. Catalyzes the attachment of glutamate to tRNA(Glu) in a two-step reaction: glutamate is first activated by ATP to form Glu-AMP and then transferred to the acceptor end of tRNA(Glu). The sequence is that of Glutamate--tRNA ligase 1 from Cereibacter sphaeroides (strain ATCC 17025 / ATH 2.4.3) (Rhodobacter sphaeroides).